We begin with the raw amino-acid sequence, 152 residues long: Transcriptional repressor NrdR (152 aa).

The segment at 3–34 is a zinc-finger region; that stretch reads CPHCHHNGSRVIDSRPAEDGMSIRRRRECVNC. One can recognise an ATP-cone domain in the interval 49–139; that stretch reads LLVVKKDGTR…VYRQFKDVDA (91 aa).

Belongs to the NrdR family. It depends on Zn(2+) as a cofactor.

Negatively regulates transcription of bacterial ribonucleotide reductase nrd genes and operons by binding to NrdR-boxes. This chain is Transcriptional repressor NrdR, found in Limosilactobacillus fermentum (strain NBRC 3956 / LMG 18251) (Lactobacillus fermentum).